The following is a 394-amino-acid chain: MYVTHLSLRDFRNYERLDLNLEPGVTLLYGPNAAGKTTVLEAIYFLATTRSPRAGADRELVRFEAQGDLGVPPFARLVCDVVRADGYVRLEVVVQRRAEEESAIGATPTIKTVRIDRKAVRALDLVGNLRVVLFTPADIALVTGAPAERRRYLDVTLSQIDGRYVRTLAHYQKVVQQRNSLLRAWREGRRPLRYADDELAFWDRELAMAGAYLLRERLHAVVDLNALAGPLYCRMSGGDTPLTLAYQSSVAGIDSVTDSRAIEQAFLAHLTRLRDDEIGRGQTLIGPHRDDLLIAVGGVPIGAYGSRGQQRSATLSLKLGEAKLMRIRTGDAPVLLLDDLLSELDAERRSHVQDILERPDQQTIVTATGTDDFDLKFLTRARRWRVESGHLYPA.

30–37 (GPNAAGKT) contributes to the ATP binding site.

The protein belongs to the RecF family.

It localises to the cytoplasm. The RecF protein is involved in DNA metabolism; it is required for DNA replication and normal SOS inducibility. RecF binds preferentially to single-stranded, linear DNA. It also seems to bind ATP. The protein is DNA replication and repair protein RecF of Roseiflexus castenholzii (strain DSM 13941 / HLO8).